A 326-amino-acid chain; its full sequence is F-box/LRR-repeat protein 12 (326 aa).

An F-box domain is found at 1–47 (MATFADLPDSVLLEIFSYLPVRDRIRISRVCHHWKKLVDDRWLWRHV). 7 LRR repeats span residues 51-78 (LYTMRPKVMWHLLRRYMASRLHSLRMGG), 86-111 (APQLSPALMRALGQKCPNLKRLCLHV), 161-185 (VPAFRDEHLQGLTRFRALRSLVLGG), 186-211 (TYRVTETGLDMGLQELNYLQRLEVLG), 212-236 (CTLSADSTLLAISRHLRDVRKIRLT), 237-261 (VRGLSAPGLSVLEGMPALESLCLLG), and 266-291 (PEMPSPQEILASCLTMPKLRVLELQG).

In terms of assembly, interacts with SKP1 and CUL1.

Its pathway is protein modification; protein ubiquitination. Substrate-recognition component of the SCF (SKP1-CUL1-F-box protein)-type E3 ubiquitin ligase complex. Mediates the polyubiquitination and proteasomal degradation of CAMK1 leading to disruption of cyclin D1/CDK4 complex assembly which results in G1 cell cycle arrest in lung epithelia. This chain is F-box/LRR-repeat protein 12 (FBXL12), found in Bos taurus (Bovine).